We begin with the raw amino-acid sequence, 426 residues long: Phytoene synthase 3, chloroplastic (426 aa).

The transit peptide at 1–52 directs the protein to the chloroplast; it reads MMSTSRAVKSPACAARRRQWSADAPNRTATFLACRHGRRLGGGGGAPCSVRA.

This sequence belongs to the phytoene/squalene synthase family. As to expression, expressed in roots and endosperm.

It localises to the plastid. Its subcellular location is the chloroplast. The protein resides in the plastoglobule. It carries out the reaction 2 (2E,6E,10E)-geranylgeranyl diphosphate = 15-cis-phytoene + 2 diphosphate. Catalyzes the conversion of geranylgeranyl diphosphate to phytoene. Mediates the first committed step in carotenoid biosynthesis. May play a role in regulating carotenoid flux in response to abiotic stress in roots. May control flux to carotenoid precursors that are required for abiotic stress-induced abscisic acid (ABA) formation in roots. This is Phytoene synthase 3, chloroplastic from Zea mays (Maize).